Consider the following 37-residue polypeptide: M-oxotoxin-Ot2b (37 aa).

In terms of tissue distribution, expressed by the venom gland.

It is found in the secreted. In terms of biological role, disrupts biological membranes, particularly those rich in phosphocholine. Has antimicrobial activity against Gram-negative bacterium E.coli, Gram-positive bacteria B.subtilis and S.aureus, and hemolytic activity against sheep, pig and guinea pig red blood cells. Has insecticidal activity against S.frugiperda ovarian cells by opening non-selective ion channels. Enhances the insecticidal activity of spider venom neurotoxic peptides. This Oxyopes takobius (Lynx spider) protein is M-oxotoxin-Ot2b.